The chain runs to 501 residues: Group 3 secretory phospholipase A2 (501 aa).

Residues 1-19 (MGVLVVLLGVLSFLGRTLG) form the signal peptide. The disordered stretch occupies residues 119–139 (RGPAESPAGTREKRAAGQNGV). The segment at 150-291 (GWTVPGTLWC…SWSSPATSLT (142 aa)) is phospholipase A2-like. Trp-158, Gly-160, and Gly-162 together coordinate Ca(2+). Disulfide bonds link Cys-159–Cys-181, Cys-180–Cys-220, Cys-187–Cys-213, and Cys-211–Cys-244. Asn-167 carries an N-linked (GlcNAc...) asparagine glycan. His-184 is an active-site residue. Asp-185 lines the Ca(2+) pocket. Asp-214 is an active-site residue. Asn-280 is a glycosylation site (N-linked (GlcNAc...) asparagine). Residues 284–298 (SSPATSLTPSPQNPA) are compositionally biased toward polar residues. Residues 284–339 (SSPATSLTPSPQNPALSRPQPMQHPQQWPSEWKESKSPSKTNATALQAPVASPGSD) form a disordered region. 2 N-linked (GlcNAc...) asparagine glycosylation sites follow: Asn-325 and Asn-403.

Belongs to the phospholipase A2 family. The cofactor is Ca(2+). N-glycosylation does not affect the catalytic activity, but is required for proper secretion. A nonglycosylated form was observed in several cell types. Post-translationally, in several cell types, the N- and C-termini are cleaved off.

The protein resides in the secreted. It is found in the cell membrane. Its subcellular location is the cytoplasm. It localises to the cytoskeleton. The protein localises to the microtubule organizing center. The protein resides in the centrosome. It is found in the centriole. Its subcellular location is the recycling endosome. It carries out the reaction a 1,2-diacyl-sn-glycero-3-phosphocholine + H2O = a 1-acyl-sn-glycero-3-phosphocholine + a fatty acid + H(+). It catalyses the reaction 1-hexadecanoyl-2-(9Z,12Z-octadecadienoyl)-sn-glycero-3-phosphocholine + H2O = (9Z,12Z)-octadecadienoate + 1-hexadecanoyl-sn-glycero-3-phosphocholine + H(+). The enzyme catalyses 1-hexadecanoyl-2-(5Z,8Z,11Z,14Z-eicosatetraenoyl)-sn-glycero-3-phosphocholine + H2O = 1-hexadecanoyl-sn-glycero-3-phosphocholine + (5Z,8Z,11Z,14Z)-eicosatetraenoate + H(+). The catalysed reaction is 1-hexadecanoyl-2-(9Z,12Z-octadecadienoyl)-sn-glycero-3-phosphoethanolamine + H2O = 1-hexadecanoyl-sn-glycero-3-phosphoethanolamine + (9Z,12Z)-octadecadienoate + H(+). It carries out the reaction 1-hexadecanoyl-2-(5Z,8Z,11Z,14Z-eicosatetraenoyl)-sn-glycero-3-phosphoethanolamine + H2O = 1-hexadecanoyl-sn-glycero-3-phosphoethanolamine + (5Z,8Z,11Z,14Z)-eicosatetraenoate + H(+). Functionally, secretory calcium-dependent phospholipase A2 that primarily targets extracellular phospholipids. Hydrolyzes the ester bond of the fatty acyl group attached at sn-2 position of phospholipids without apparent head group selectivity. Contributes to phospholipid remodeling of low-density lipoprotein (LDL) and high-density lipoprotein (HDL) particles. Hydrolyzes LDL phospholipids releasing unsaturated fatty acids that regulate macrophage differentiation toward foam cells. May act in an autocrine and paracrine manner. Secreted by immature mast cells, acts on nearby fibroblasts upstream to PTDGS to synthesize prostaglandin D2 (PGD2), which in turn promotes mast cell maturation and degranulation via PTGDR. Secreted by epididymal epithelium, acts on immature sperm cells within the duct, modulating the degree of unsaturation of the fatty acyl components of phosphatidylcholines required for acrosome assembly and sperm cell motility. Facilitates the replacement of fatty acyl chains in phosphatidylcholines in sperm membranes from omega-6 and omega-9 to omega-3 polyunsaturated fatty acids (PUFAs). Coupled to lipoxygenase pathway, may process omega-6 PUFAs to generate oxygenated lipid mediators in the male reproductive tract. At pericentrosomal preciliary compartment, negatively regulates ciliogenesis likely by regulating endocytotic recycling of ciliary membrane protein. Coupled to cyclooxygenase pathway provides arachidonate to generate prostaglandin E2 (PGE2), a potent immunomodulatory lipid in inflammation and tumorigenesis. At colonic epithelial barrier, preferentially hydrolyzes phospholipids having arachidonate and docosahexaenoate at sn-2 position, contributing to the generation of oxygenated metabolites involved in colonic stem cell homeostasis. Releases C16:0 and C18:0 lysophosphatidylcholine subclasses from neuron plasma membranes and promotes neurite outgrowth and neuron survival. The polypeptide is Group 3 secretory phospholipase A2 (PLA2G3) (Bos taurus (Bovine)).